The chain runs to 146 residues: Large ribosomal subunit protein uL15 (146 aa).

Residues 1–18 (MKLHELKPSEGSRKERNR) show a composition bias toward basic and acidic residues. Positions 1–50 (MKLHELKPSEGSRKERNRVGRGTGSGNGKTSGRGHKGQKARSGGGVRLGF) are disordered. Residues 21–31 (RGTGSGNGKTS) show a composition bias toward gly residues.

The protein belongs to the universal ribosomal protein uL15 family. Part of the 50S ribosomal subunit.

In terms of biological role, binds to the 23S rRNA. In Listeria innocua serovar 6a (strain ATCC BAA-680 / CLIP 11262), this protein is Large ribosomal subunit protein uL15.